Here is a 177-residue protein sequence, read N- to C-terminus: Crossover junction endodeoxyribonuclease RuvC (177 aa).

Catalysis depends on residues D8, E72, and D144. The Mg(2+) site is built by D8, E72, and D144.

This sequence belongs to the RuvC family. As to quaternary structure, homodimer which binds Holliday junction (HJ) DNA. The HJ becomes 2-fold symmetrical on binding to RuvC with unstacked arms; it has a different conformation from HJ DNA in complex with RuvA. In the full resolvosome a probable DNA-RuvA(4)-RuvB(12)-RuvC(2) complex forms which resolves the HJ. Requires Mg(2+) as cofactor.

The protein localises to the cytoplasm. The catalysed reaction is Endonucleolytic cleavage at a junction such as a reciprocal single-stranded crossover between two homologous DNA duplexes (Holliday junction).. The RuvA-RuvB-RuvC complex processes Holliday junction (HJ) DNA during genetic recombination and DNA repair. Endonuclease that resolves HJ intermediates. Cleaves cruciform DNA by making single-stranded nicks across the HJ at symmetrical positions within the homologous arms, yielding a 5'-phosphate and a 3'-hydroxyl group; requires a central core of homology in the junction. The consensus cleavage sequence is 5'-(A/T)TT(C/G)-3'. Cleavage occurs on the 3'-side of the TT dinucleotide at the point of strand exchange. HJ branch migration catalyzed by RuvA-RuvB allows RuvC to scan DNA until it finds its consensus sequence, where it cleaves and resolves the cruciform DNA. The sequence is that of Crossover junction endodeoxyribonuclease RuvC from Teredinibacter turnerae (strain ATCC 39867 / T7901).